Here is an 856-residue protein sequence, read N- to C-terminus: MEAALLVCQYTIQSLIHLTGEDPGFFNVEIPEFPFYPTCNVCTADVNVTINFDVGGKKHQLDLDFGQLTPHTKAVYQPRGAFGGSENATNLFLLELLGAGELALTMRSKKLPINVTTGEEQQVSLESVDVYFQDVFGTMWCHHAEMQNPVYLIPETVPYIKWDNCNSTNITAVVRAQGLDVTLPLSLPTSAQDSNFSVKTQMLGNEIDIECIMEDGEISQVLPGDNKFNITCSGYESHVPSGGILTSTSPVVTPIPGTGYAYSLRLTPRPVSRFLGNNSILYVFYSGNGPKASGGDYCIQSNIVFSDEIPASQDMPTNTTDITYVGDNATYSVPMVTSEDANSPNVTVTAFWAWPNNTETDFKCKWTLTSGTPSGCENISGAFASNRTFDITVSGLGTAPKTLIITRTATNATTTTHKVIFSKAPESTTTSPTSNTTGFAAPNTTTGLPSSTHVPTNLTAPASTGPTVSTADVTSPTPAGTTSGASPVTPSPSPRDNGTESKAPDMTSPTPAVTTPTPNATSPTSAVTTPTPNATSPTLGKTSPTSAVTTPTPNATSPTSAVTTPTPNATGPTVGETSPQANTTNHTLGGTSSTPVVTSQPKNATSAVTTGQHNITSSSTSSMSLRPSSISETTSHMPLLTSAHPTGGENITQVTPASTSTHHVSTSSPAPRPGTTSQASGPGNSSTSTKPGEVNVTKGTPPKNATSPQAPSGQKTAVPTVTSTGGKANSTTGGKHTTGHGARTSTEPTTDYGGDSTTPRTRYNATTYLPPSTSSELRPRWTFTSPPVTTAQATVPVPPTSQPRFSNLSMLVLQWASLAVLTLLLLLVMADCAFRRNLSTSHTYTTPPYDDAETYV.

Over 1–809 (MEAALLVCQY…TSQPRFSNLS (809 aa)) the chain is Virion surface. 27 N-linked (GlcNAc...) asparagine; by host glycosylation sites follow: Asn47, Asn87, Asn114, Asn166, Asn169, Asn195, Asn229, Asn277, Asn318, Asn328, Asn345, Asn356, Asn378, Asn386, Asn411, Asn435, Asn443, Asn457, Asn497, Asn519, Asn533, Asn554, Asn568, Asn582, Asn585, Asn603, and Asn614. The segment at 421–779 (FSKAPESTTT…PPSTSSELRP (359 aa)) is disordered. Residues 427-437 (STTTSPTSNTT) are compositionally biased toward low complexity. A compositionally biased stretch (polar residues) spans 442 to 488 (PNTTTGLPSSTHVPTNLTAPASTGPTVSTADVTSPTPAGTTSGASPV). Over residues 507–570 (TSPTPAVTTP…AVTTPTPNAT (64 aa)) the composition is skewed to low complexity. Residues 575-616 (GETSPQANTTNHTLGGTSSTPVVTSQPKNATSAVTTGQHNIT) are compositionally biased toward polar residues. Residues 617-631 (SSSTSSMSLRPSSIS) are compositionally biased toward low complexity. Asn650 carries an N-linked (GlcNAc...) asparagine; by host glycan. Over residues 654–669 (VTPASTSTHHVSTSSP) the composition is skewed to low complexity. Positions 674–690 (GTTSQASGPGNSSTSTK) are enriched in polar residues. Residues Asn684, Asn695, Asn704, and Asn729 are each glycosylated (N-linked (GlcNAc...) asparagine; by host). Positions 703–730 (KNATSPQAPSGQKTAVPTVTSTGGKANS) are enriched in polar residues. Positions 731–741 (TTGGKHTTGHG) are enriched in low complexity. Polar residues predominate over residues 743-776 (RTSTEPTTDYGGDSTTPRTRYNATTYLPPSTSSE). Residues Asn764 and Asn807 are each glycosylated (N-linked (GlcNAc...) asparagine; by host). A helical transmembrane segment spans residues 810 to 830 (MLVLQWASLAVLTLLLLLVMA). Topologically, residues 831–856 (DCAFRRNLSTSHTYTTPPYDDAETYV) are intravirion.

The protein belongs to the Epstein-Barr GP350 family. Interacts with host CR2. Post-translationally, extensively glycosylated.

The protein resides in the virion membrane. The protein localises to the host membrane. Its function is as follows. Initiates virion attachment to host B-lymphocyte cell, leading to virus entry. Acts by binding to host CR2 at the surface of B-lymphocytes, facilitating the binding of viral glycoprotein gp42 to HLA class II molecules. Attachment triggers virion-host membrane fusion and invasion of the host cell. This chain is Envelope glycoprotein GP350, found in Homo sapiens (Human).